The sequence spans 165 residues: MIVLTRRISDPGTLAVSGTVTLDVDSRIKSRLRLTLDDGREAGLMLERGHLLRGGELLADADGTHLIRVLAAPEAVSTVRCADPHLLARAAYHLGNRHVPLQIEPGLLRFQHDHVLDDMLRGLGLTVEAEQAPFEPEAGAYQSAPHGHSHAHGHDHPFVRLPAHS.

The interval 137–156 is disordered; that stretch reads EAGAYQSAPHGHSHAHGHDH.

Belongs to the UreE family.

The protein localises to the cytoplasm. In terms of biological role, involved in urease metallocenter assembly. Binds nickel. Probably functions as a nickel donor during metallocenter assembly. The sequence is that of Urease accessory protein UreE from Pseudomonas putida (strain GB-1).